The primary structure comprises 35 residues: uncharacterized protein (35 aa).

A helical transmembrane segment spans residues 10–30 (LMITASFFAIFIIIVVSVLLL).

The protein resides in the membrane. This is an uncharacterized protein from Salmonella typhimurium (strain LT2 / SGSC1412 / ATCC 700720).